Reading from the N-terminus, the 225-residue chain is Ribonuclease 3 (225 aa).

Positions 7–129 (IPRLCRTLGY…IIGAIYLDSD (123 aa)) constitute an RNase III domain. Glu-42 provides a ligand contact to Mg(2+). Asp-46 is a catalytic residue. Mg(2+)-binding residues include Asp-115 and Glu-118. Residue Glu-118 is part of the active site. In terms of domain architecture, DRBM spans 155–225 (DPKTLLQEYL…AAQVLELIKK (71 aa)).

It belongs to the ribonuclease III family. As to quaternary structure, homodimer. Requires Mg(2+) as cofactor.

It localises to the cytoplasm. It carries out the reaction Endonucleolytic cleavage to 5'-phosphomonoester.. Digests double-stranded RNA. Involved in the processing of primary rRNA transcript to yield the immediate precursors to the large and small rRNAs (23S and 16S). Processes some mRNAs, and tRNAs when they are encoded in the rRNA operon. Processes pre-crRNA and tracrRNA of type II CRISPR loci if present in the organism. This chain is Ribonuclease 3, found in Shewanella pealeana (strain ATCC 700345 / ANG-SQ1).